Consider the following 522-residue polypeptide: F-box-like/WD repeat-containing protein TBL1Y (522 aa).

Position 2 is an N-acetylserine (serine 2). In terms of domain architecture, LisH spans 4-36; sequence TSDEVNFLVYRYLQESGFSHSAFTFGIESHISQ. An F-box-like domain is found at 41–86; sequence GTLVPPSALISILQKGLQYVEAEISINKDGTVFDSRPIESLSLIVA. Lysine 102 carries the post-translational modification N6-acetyllysine. The residue at position 130 (serine 130) is a Phosphoserine. 8 WD repeats span residues 177-216, 233-272, 274-313, 316-354, 357-396, 399-447, 450-489, and 491-521; these read GHESEVFICAWNPVSDLLASGSGDSTARIWNLNENSNGGS, PSNKDVTSLDWNSDGTLLAMGSYDGFARIWTENGNLASTL, QHKGPIFALKWNKKGNYVLSAGVDKTTIIWDAHTGEAKQQ, FHSAPALDVDWQNNMTFASCSTDMCIHVCRLGCDHPVKT, GHTNEVNAIKWDPSGMLLASCSDDMTLKIWSMKQDACVHD, AHSK…CTHT, KHQEPVYSVAFSPDGKYLASGSFDKYVHIWNTQSGSLVHS, and QGTGGIFEVCWNARGDKVGASASDGSVCVLD. Residue lysine 287 forms a Glycyl lysine isopeptide (Lys-Gly) (interchain with G-Cter in SUMO2) linkage.

It belongs to the WD repeat EBI family. Probable component of the N-Cor repressor complex and some E3 ubiquitin ligase complex. Interacts with NCOR2. Fetal brain and prostate. Expressed in the cochlear spiral ganglion neurons, and in outer and inner hair cells.

It is found in the nucleus. In terms of biological role, F-box-like protein involved in the recruitment of the ubiquitin/19S proteasome complex to nuclear receptor-regulated transcription units. Plays an essential role in transcription activation mediated by nuclear receptors. Probably acts as integral component of corepressor complexes that mediates the recruitment of the 19S proteasome complex, leading to the subsequent proteasomal degradation of transcription repressor complexes, thereby allowing cofactor exchange. The chain is F-box-like/WD repeat-containing protein TBL1Y (TBL1Y) from Homo sapiens (Human).